The primary structure comprises 192 residues: UPF0312 protein PSPTO_5071 (192 aa).

The N-terminal stretch at 1 to 23 (MLKKSLAALALGTALLSAGQAMA) is a signal peptide.

It belongs to the UPF0312 family. Type 1 subfamily.

It is found in the periplasm. The chain is UPF0312 protein PSPTO_5071 from Pseudomonas syringae pv. tomato (strain ATCC BAA-871 / DC3000).